The primary structure comprises 683 residues: DNA ligase (683 aa).

Residues 42–46 (DAEYD), 91–92 (SL), and Glu-122 each bind NAD(+). Residue Lys-124 is the N6-AMP-lysine intermediate of the active site. NAD(+) contacts are provided by Arg-145, Glu-182, Lys-299, and Lys-323. The Zn(2+) site is built by Cys-417, Cys-420, Cys-435, and Cys-441. One can recognise a BRCT domain in the interval 602–683 (APQGVLAGKT…MRKLLEGQTT (82 aa)).

The protein belongs to the NAD-dependent DNA ligase family. LigA subfamily. Requires Mg(2+) as cofactor. It depends on Mn(2+) as a cofactor.

The catalysed reaction is NAD(+) + (deoxyribonucleotide)n-3'-hydroxyl + 5'-phospho-(deoxyribonucleotide)m = (deoxyribonucleotide)n+m + AMP + beta-nicotinamide D-nucleotide.. DNA ligase that catalyzes the formation of phosphodiester linkages between 5'-phosphoryl and 3'-hydroxyl groups in double-stranded DNA using NAD as a coenzyme and as the energy source for the reaction. It is essential for DNA replication and repair of damaged DNA. In Paraburkholderia phymatum (strain DSM 17167 / CIP 108236 / LMG 21445 / STM815) (Burkholderia phymatum), this protein is DNA ligase.